The following is a 433-amino-acid chain: Urokinase-type plasminogen activator (433 aa).

An N-terminal signal peptide occupies residues 1-20 (MRALLAHLLLCVLVVSASKG). The EGF-like domain occupies 26 to 62 (VPSDCGCLNGGTCMSNKYFSSIHWCNCPKKFGGQHCE). Disulfide bonds link Cys30/Cys38, Cys32/Cys50, Cys52/Cys61, Cys69/Cys150, Cys90/Cys132, and Cys121/Cys145. Residues 33–56 (LNGGTCMSNKYFSSIHWCNCPKKF) form a binds urokinase plasminogen activator surface receptor region. The Kringle domain occupies 69–150 (CYEGNGHFYR…RVQECMVHNC (82 aa)). Positions 151 to 177 (ADGKKPSSPPEELQFQCGQRTLRPRFK) are connecting peptide. The residue at position 157 (Ser157) is a Phosphoserine. Cystine bridges form between Cys167-Cys298, Cys208-Cys224, Cys216-Cys287, Cys315-Cys384, Cys347-Cys363, and Cys374-Cys402. The Peptidase S1 domain occupies 178 to 426 (IVGGEFTTIE…FLPWIHSHTR (249 aa)). Catalysis depends on charge relay system residues His223 and Asp274. N-linked (GlcNAc...) asparagine glycosylation is present at Asn324. Ser325 carries the post-translational modification Phosphoserine. Ser378 functions as the Charge relay system in the catalytic mechanism.

Belongs to the peptidase S1 family. Found in high and low molecular mass forms. Each consists of two chains, A and B. The high molecular mass form contains a long chain A which is cleaved to yield a short chain A. Forms heterodimer with SERPINA5. Binds LRP1B; binding is followed by internalization and degradation. Interacts with MRC2. Interacts with PLAUR. In complex with SERPINE1, interacts with PLAUR/uPAR. Interacts with SORL1 and LRP1, either alone or in complex with SERPINE1; these interactions are abolished in the presence of LRPAP1/RAP. The ternary complex composed of PLAUR-PLAU-PAI1 also interacts with SORLA. Phosphorylation of Ser-157 and Ser-325 abolishes proadhesive ability but does not interfere with receptor binding. Post-translationally, produced as an inactive single-chain protein (pro-uPA or sc-uPA), is processed into the active disulfide-linked two-chain form of PLAU/uPA by a proteolytic event mediated, at least, by TMPRSS4.

It is found in the secreted. The enzyme catalyses Specific cleavage of Arg-|-Val bond in plasminogen to form plasmin.. Its activity is regulated as follows. Inhibited by SERPINA5. Inhibited by SERPINE1. Its function is as follows. Specifically cleaves the zymogen plasminogen to form the active enzyme plasmin. This is Urokinase-type plasminogen activator (PLAU) from Papio cynocephalus (Yellow baboon).